A 359-amino-acid polypeptide reads, in one-letter code: Type-1 angiotensin II receptor (359 aa).

The Extracellular segment spans residues M1–N25. N4 carries N-linked (GlcNAc...) asparagine glycosylation. 2 residues coordinate angiotensin II: Q15 and D17. Cystine bridges form between C18–C274 and C101–C180. A helical membrane pass occupies residues Y26 to F55. The Cytoplasmic portion of the chain corresponds to Y56–T61. A helical membrane pass occupies residues V62–A89. Residues M90–N98 are Extracellular-facing. The helical transmembrane segment at Y99 to D125 threads the bilayer. At R126 to T141 the chain is on the cytoplasmic side. Residues M142 to I165 traverse the membrane as a helical segment. The Extracellular portion of the chain corresponds to H166 to T190. R167 is a binding site for angiotensin II. Residue N176 is glycosylated (N-linked (GlcNAc...) asparagine). 3 residues coordinate angiotensin II: F182, H183, and Y184. Residue N188 is glycosylated (N-linked (GlcNAc...) asparagine). Residues L191 to T216 form a helical membrane-spanning segment. K199 is an angiotensin II binding site. Residues L217 to F239 lie on the Cytoplasmic side of the membrane. Residues K240–L268 form a helical membrane-spanning segment. Topologically, residues G269–D278 are extracellular. The helical transmembrane segment at I279 to F304 threads the bilayer. At L305 to E359 the chain is on the cytoplasmic side. Positions S335–K350 are enriched in polar residues. A disordered region spans residues S335–E359. Residue C355 is the site of S-palmitoyl cysteine attachment.

It belongs to the G-protein coupled receptor 1 family. Interacts with MAS1. Interacts with ARRB1. Interacts with FLNA (via filamin repeat 21); increases PKA-mediated phosphorylation of FLNA. C-terminal Ser or Thr residues may be phosphorylated.

Its subcellular location is the cell membrane. Functionally, receptor for angiotensin II, a vasoconstricting peptide, which acts as a key regulator of blood pressure and sodium retention by the kidney. The activated receptor in turn couples to G-alpha proteins G(q) (GNAQ, GNA11, GNA14 or GNA15) and thus activates phospholipase C and increases the cytosolic Ca(2+) concentrations, which in turn triggers cellular responses such as stimulation of protein kinase C. The polypeptide is Type-1 angiotensin II receptor (AGTR1) (Oryctolagus cuniculus (Rabbit)).